The sequence spans 259 residues: Ferritin-2, chloroplastic (259 aa).

Residues 1–52 constitute a chloroplast transit peptide; it reads MLLKLAPAFTLLNSHGENLSPMLSTSSQGFVLKNFSTKSRNGLLVVCASKGS. The extension peptide (EP) stretch occupies residues 53–85; that stretch reads NTKPLTGVVFEPFEEVKKELMLVPTVPQVSLAR. The Ferritin-like diiron domain maps to 86 to 239; sequence HKYSDQCEAA…EYVAQLRRVG (154 aa). Fe cation-binding residues include Glu-103, Glu-138, His-141, and Gln-221.

Belongs to the ferritin family. In terms of assembly, oligomer of 24 subunits. There are two types of subunits: L (light) chain and H (heavy) chain. The major chain can be light or heavy, depending on the species and tissue type. The functional molecule forms a roughly spherical shell with a diameter of 12 nm and contains a central cavity into which the insoluble mineral iron core is deposited.

It is found in the plastid. The protein resides in the chloroplast. The enzyme catalyses 4 Fe(2+) + O2 + 4 H(+) = 4 Fe(3+) + 2 H2O. Stores iron in a soluble, non-toxic, readily available form. Important for iron homeostasis. Has ferroxidase activity. Iron is taken up in the ferrous form and deposited as ferric hydroxides after oxidation. The sequence is that of Ferritin-2, chloroplastic (FER2) from Nicotiana tabacum (Common tobacco).